Consider the following 491-residue polypeptide: Protein nucleotidyltransferase YdiU (491 aa).

ATP contacts are provided by G94, G96, R97, K117, D129, G130, R180, and R187. D256 functions as the Proton acceptor in the catalytic mechanism. 2 residues coordinate Mg(2+): N257 and D266. D266 provides a ligand contact to ATP.

Belongs to the SELO family. It depends on Mg(2+) as a cofactor. Requires Mn(2+) as cofactor.

The enzyme catalyses L-seryl-[protein] + ATP = 3-O-(5'-adenylyl)-L-seryl-[protein] + diphosphate. The catalysed reaction is L-threonyl-[protein] + ATP = 3-O-(5'-adenylyl)-L-threonyl-[protein] + diphosphate. It carries out the reaction L-tyrosyl-[protein] + ATP = O-(5'-adenylyl)-L-tyrosyl-[protein] + diphosphate. It catalyses the reaction L-histidyl-[protein] + UTP = N(tele)-(5'-uridylyl)-L-histidyl-[protein] + diphosphate. The enzyme catalyses L-seryl-[protein] + UTP = O-(5'-uridylyl)-L-seryl-[protein] + diphosphate. The catalysed reaction is L-tyrosyl-[protein] + UTP = O-(5'-uridylyl)-L-tyrosyl-[protein] + diphosphate. In terms of biological role, nucleotidyltransferase involved in the post-translational modification of proteins. It can catalyze the addition of adenosine monophosphate (AMP) or uridine monophosphate (UMP) to a protein, resulting in modifications known as AMPylation and UMPylation. The chain is Protein nucleotidyltransferase YdiU from Clostridium botulinum (strain 657 / Type Ba4).